Consider the following 892-residue polypeptide: Histone deacetylase 4 (892 aa).

Residues 145–225 (NGNLSNLSVP…MSNVNGHDNS (81 aa)) are disordered. Polar residues-rich tracts occupy residues 171–192 (SAPT…ISQL) and 208–222 (ESNS…VNGH). The segment at 481-822 (STGLGYDPLM…VQALIGESDD (342 aa)) is histone deacetylase. Histidine 628 is a catalytic residue.

It belongs to the histone deacetylase family. HD type 2 subfamily.

Its subcellular location is the nucleus. It carries out the reaction N(6)-acetyl-L-lysyl-[histone] + H2O = L-lysyl-[histone] + acetate. Its function is as follows. Responsible for the deacetylation of lysine residues on the N-terminal part of the core histones (H2A, H2B, H3 and H4). Histone deacetylation gives a tag for epigenetic repression and plays an important role in transcriptional regulation, cell cycle progression and developmental events. Histone deacetylases act via the formation of large multiprotein complexes. The polypeptide is Histone deacetylase 4 (hda-4) (Caenorhabditis briggsae).